The following is a 466-amino-acid chain: Flagellum-specific ATP synthase (466 aa).

194-201 (SSSGLGKS) lines the ATP pocket.

Belongs to the ATPase alpha/beta chains family.

It is found in the cytoplasm. It catalyses the reaction ATP + H2O + 4 H(+)(in) = ADP + phosphate + 5 H(+)(out). Its function is as follows. Probable catalytic subunit of a protein translocase for flagellum-specific export, or a proton translocase involved in local circuits at the flagellum. May be involved in a specialized protein export pathway that proceeds without signal peptide cleavage. The polypeptide is Flagellum-specific ATP synthase (fliI) (Buchnera aphidicola subsp. Schizaphis graminum (strain Sg)).